The chain runs to 154 residues: Ribonuclease H (154 aa).

One can recognise an RNase H type-1 domain in the interval 1-142 (MRKQVEIFTD…CDELARAAAS (142 aa)). Mg(2+) is bound by residues Asp10, Glu48, Asp70, and Asp134.

Belongs to the RNase H family. Monomer. It depends on Mg(2+) as a cofactor.

Its subcellular location is the cytoplasm. It catalyses the reaction Endonucleolytic cleavage to 5'-phosphomonoester.. Its function is as follows. Endonuclease that specifically degrades the RNA of RNA-DNA hybrids. The chain is Ribonuclease H from Pectobacterium atrosepticum (strain SCRI 1043 / ATCC BAA-672) (Erwinia carotovora subsp. atroseptica).